The chain runs to 277 residues: S-formylglutathione hydrolase FrmB (277 aa).

Residues Ser-145, Asp-221, and His-254 each act as charge relay system in the active site.

Belongs to the esterase D family.

It carries out the reaction S-formylglutathione + H2O = formate + glutathione + H(+). Serine hydrolase involved in the detoxification of formaldehyde. Hydrolyzes S-formylglutathione to glutathione and formate. This chain is S-formylglutathione hydrolase FrmB (frmB), found in Escherichia coli O1:K1 / APEC.